The primary structure comprises 222 residues: Adenylate kinase (222 aa).

ATP is bound at residue 16 to 21 (GAGKGT). An NMP region spans residues 36–65 (ATGDMLRSQISKGTELGLQAKKIMDQGGLV). AMP is bound by residues Thr-37, Arg-42, 63-65 (GLV), 92-95 (GFPR), and Gln-99. The interval 133-170 (GRLIHPASGRSYHKLFNPPKEDMKDDVTGEPLVQRSDD) is LID. Residues Arg-134 and 143–144 (SY) each bind ATP. The AMP site is built by Arg-167 and Arg-178. ATP is bound at residue Gln-206.

It belongs to the adenylate kinase family. AK2 subfamily. In terms of assembly, monomer.

Its subcellular location is the cytoplasm. The protein resides in the cytosol. The protein localises to the mitochondrion intermembrane space. The catalysed reaction is AMP + ATP = 2 ADP. Functionally, catalyzes the reversible transfer of the terminal phosphate group between ATP and AMP. Plays an important role in cellular energy homeostasis and in adenine nucleotide metabolism. Adenylate kinase activity is critical for regulation of the phosphate utilization and the AMP de novo biosynthesis pathways. This chain is Adenylate kinase, found in Candida glabrata (strain ATCC 2001 / BCRC 20586 / JCM 3761 / NBRC 0622 / NRRL Y-65 / CBS 138) (Yeast).